The chain runs to 344 residues: Glycerol-3-phosphate dehydrogenase [NAD(P)+] (344 aa).

Positions 23, 24, 44, and 118 each coordinate NADPH. Lysine 118, glycine 147, and threonine 149 together coordinate sn-glycerol 3-phosphate. Alanine 151 lines the NADPH pocket. Sn-glycerol 3-phosphate is bound by residues lysine 203, aspartate 256, serine 266, arginine 267, and asparagine 268. The active-site Proton acceptor is the lysine 203. NADPH is bound at residue arginine 267. 2 residues coordinate NADPH: valine 291 and glutamate 293.

This sequence belongs to the NAD-dependent glycerol-3-phosphate dehydrogenase family.

It localises to the cytoplasm. The enzyme catalyses sn-glycerol 3-phosphate + NAD(+) = dihydroxyacetone phosphate + NADH + H(+). It carries out the reaction sn-glycerol 3-phosphate + NADP(+) = dihydroxyacetone phosphate + NADPH + H(+). Its pathway is membrane lipid metabolism; glycerophospholipid metabolism. In terms of biological role, catalyzes the reduction of the glycolytic intermediate dihydroxyacetone phosphate (DHAP) to sn-glycerol 3-phosphate (G3P), the key precursor for phospholipid synthesis. This chain is Glycerol-3-phosphate dehydrogenase [NAD(P)+], found in Vibrio cholerae serotype O1 (strain ATCC 39541 / Classical Ogawa 395 / O395).